The following is a 451-amino-acid chain: Spermidine sinapoyl-CoA acyltransferase (451 aa).

Spermidine is bound by residues Y47, H169, S294, D316, and L378. The active-site Proton acceptor is H169. Residue D391 is the Proton acceptor of the active site.

This sequence belongs to the plant acyltransferase family. In terms of assembly, monomer. In terms of tissue distribution, predominantly expressed in siliques, especially in seeds around the embryo, and, at low levels, in flowers. Barely detectable in stems, leaves, and roots.

The catalysed reaction is 2 (E)-sinapoyl-CoA + spermidine = N(1),N(8)-bis[(E)-sinapoyl]-spermidine + 2 CoA + 2 H(+). It participates in amine and polyamine metabolism; spermidine metabolism. Its function is as follows. Spermidine sinapoyl-CoA acyltransferase that mediates the accumulation of disinapoyl spermidine conjugates in seeds. Catalyzes the two conjugating steps required for the biosynthesis of N1,N8-disipanoyl-spermidine. Can also use putrescine as an acyl acceptor to convert it into monosinapoyl-putrescine. The polypeptide is Spermidine sinapoyl-CoA acyltransferase (Arabidopsis thaliana (Mouse-ear cress)).